The primary structure comprises 336 residues: DNA polymerase beta (336 aa).

3 residues coordinate K(+): Lys-59, Leu-61, and Val-64. The Na(+) site is built by Lys-59, Leu-61, and Val-64. The active-site Nucleophile; Schiff-base intermediate with DNA; for 5'-dRP lyase activity is Lys-71. Arg-82 is modified (omega-N-methylarginine; by PRMT6). Residues Thr-100, Val-102, and Ile-105 each contribute to the K(+) site. Na(+) is bound by residues Thr-100, Val-102, and Ile-105. Arg-148 contacts a 2'-deoxyribonucleoside 5'-triphosphate. Arg-151 carries the post-translational modification Omega-N-methylarginine; by PRMT6. Residues Ser-179, Arg-182, Gly-188, and Asp-189 each contribute to the a 2'-deoxyribonucleoside 5'-triphosphate site. The interval 182 to 191 (RGAESSGDID) is DNA-binding. The Mg(2+) site is built by Asp-189, Asp-191, and Asp-257.

This sequence belongs to the DNA polymerase type-X family. It depends on Mg(2+) as a cofactor. Methylation by PRMT6 stimulates the polymerase activity by enhancing DNA binding and processivity. Post-translationally, ubiquitinated: monoubiquitinated by huwe1/arf-bp1. Monoubiquitinated protein is then the target of stub1/chip, which catalyzes polyubiquitination from monoubiquitin, leading to degradation by the proteasome. usp47 mediates the deubiquitination of monoubiquitinated protein, preventing polyubiquitination by STUB1/CHIP and its subsequent degradation.

Its subcellular location is the nucleus. It localises to the cytoplasm. The enzyme catalyses DNA(n) + a 2'-deoxyribonucleoside 5'-triphosphate = DNA(n+1) + diphosphate. It carries out the reaction a 5'-end 2'-deoxyribose-2'-deoxyribonucleotide-DNA = (2E,4S)-4-hydroxypenten-2-al-5-phosphate + a 5'-end 5'-phospho-2'-deoxyribonucleoside-DNA + H(+). The catalysed reaction is 2'-deoxyribonucleotide-(2'-deoxyribose 5'-phosphate)-2'-deoxyribonucleotide-DNA = a 3'-end 2'-deoxyribonucleotide-(2,3-dehydro-2,3-deoxyribose 5'-phosphate)-DNA + a 5'-end 5'-phospho-2'-deoxyribonucleoside-DNA + H(+). Repair polymerase that plays a key role in base-excision repair. During this process, the damaged base is excised by specific DNA glycosylases, the DNA backbone is nicked at the abasic site by an apurinic/apyrimidic (AP) endonuclease, and POLB removes 5'-deoxyribose-phosphate from the preincised AP site acting as a 5'-deoxyribose-phosphate lyase (5'-dRP lyase); through its DNA polymerase activity, it adds one nucleotide to the 3' end of the arising single-nucleotide gap. Conducts 'gap-filling' DNA synthesis in a stepwise distributive fashion rather than in a processive fashion as for other DNA polymerases. It is also able to cleave sugar-phosphate bonds 3' to an intact AP site, acting as an AP lyase. The sequence is that of DNA polymerase beta (polb) from Danio rerio (Zebrafish).